Here is a 949-residue protein sequence, read N- to C-terminus: Isoleucine--tRNA ligase (949 aa).

The 'HIGH' region signature appears at 58 to 68 (PYANGDIHIGH). Glu-567 is a binding site for L-isoleucyl-5'-AMP. The 'KMSKS' region signature appears at 608–612 (KMSKS). Residue Lys-611 participates in ATP binding. The Zn(2+) site is built by Cys-912, Cys-915, Cys-932, and Cys-935.

Belongs to the class-I aminoacyl-tRNA synthetase family. IleS type 1 subfamily. Monomer. Requires Zn(2+) as cofactor.

It localises to the cytoplasm. The catalysed reaction is tRNA(Ile) + L-isoleucine + ATP = L-isoleucyl-tRNA(Ile) + AMP + diphosphate. Its function is as follows. Catalyzes the attachment of isoleucine to tRNA(Ile). As IleRS can inadvertently accommodate and process structurally similar amino acids such as valine, to avoid such errors it has two additional distinct tRNA(Ile)-dependent editing activities. One activity is designated as 'pretransfer' editing and involves the hydrolysis of activated Val-AMP. The other activity is designated 'posttransfer' editing and involves deacylation of mischarged Val-tRNA(Ile). In Vibrio cholerae serotype O1 (strain ATCC 39315 / El Tor Inaba N16961), this protein is Isoleucine--tRNA ligase.